A 507-amino-acid chain; its full sequence is 3-[(3aS,4S,7aS)-7a-methyl-1,5-dioxo-octahydro-1H-inden-4-yl]propanoyl:CoA ligase (507 aa).

ATP contacts are provided by residues 177 to 185 (TSGTTGRSK), aspartate 391, arginine 406, and lysine 497.

It belongs to the ATP-dependent AMP-binding enzyme family.

The catalysed reaction is 3-[(3aS,4S,7aS)-7a-methyl-1,5-dioxo-octahydro-1H-inden-4-yl]propanoate + ATP + CoA = 3-[(3aS,4S,7aS)-7a-methyl-1,5-dioxo-octahydro-1H-inden-4-yl]propanoyl-CoA + AMP + diphosphate. The enzyme catalyses 5-hydroxy-3-[(3aS,4S,5R,7aS)-7a-methyl-1,5-dioxo-octahydro-1H-inden-4-yl]propanoate + ATP + CoA = 3-[(3aS,4S,5R,7aS)-5-hydroxy-7a-methyl-1-oxo-octahydro-1H-inden-4-yl]propanoyl-CoA + AMP + diphosphate. Functionally, involved in the catabolism of the rings C and D of cholesterol. Catalyzes the ATP-dependent CoA thioesterification of 3aalpha-H-4alpha(3'-propanoate)-7abeta-methylhexahydro-1,5-indanedione (HIP) to yield HIP-CoA. It can also use the hydroxylated analogs of HIP, 5alpha-OH HIP and 1beta-OH HIP. It requires that the side chain at C17 is completely removed. This is 3-[(3aS,4S,7aS)-7a-methyl-1,5-dioxo-octahydro-1H-inden-4-yl]propanoyl:CoA ligase from Mycobacterium tuberculosis (strain ATCC 25618 / H37Rv).